The following is a 178-amino-acid chain: Nuclear transcription factor Y subunit B-2 (178 aa).

Residues 39 to 45 mediate DNA binding; the sequence is LPIANIS. A subunit association domain (SAD) region spans residues 66–77; it reads LQECVSEFISFV. The interval 131–156 is disordered; the sequence is SSKAGDGSVKKDTIGPHSGASSSSAQ.

The protein belongs to the NFYB/HAP3 subunit family. Heterotrimeric transcription factor composed of three components, NF-YA, NF-YB and NF-YC. NF-YB and NF-YC must interact and dimerize for NF-YA association and DNA binding. Interacts with NFYC4 and NFYC6. Ubiquitous.

It localises to the nucleus. In terms of biological role, component of the NF-Y/HAP transcription factor complex. The NF-Y complex stimulates the transcription of various genes by recognizing and binding to a CCAAT motif in promoters. May regulate the expression of photosynthetic genes, and may be involved in chloroplast and amyloplast development. In Oryza sativa subsp. japonica (Rice), this protein is Nuclear transcription factor Y subunit B-2 (NFYB2).